The sequence spans 960 residues: Phosphoenolpyruvate carboxylase 2 (960 aa).

Catalysis depends on residues histidine 167 and lysine 595.

Belongs to the PEPCase type 1 family. Homotetramer. It depends on Mg(2+) as a cofactor.

The protein resides in the cytoplasm. The enzyme catalyses oxaloacetate + phosphate = phosphoenolpyruvate + hydrogencarbonate. It functions in the pathway photosynthesis; C3 acid pathway. Through the carboxylation of phosphoenolpyruvate (PEP) it forms oxaloacetate, a four-carbon dicarboxylic acid source for the tricarboxylic acid cycle. This Sorghum bicolor (Sorghum) protein is Phosphoenolpyruvate carboxylase 2.